A 428-amino-acid chain; its full sequence is Ectoine/5-hydroxyectoine TRAP transporter large permease protein UehC (428 aa).

The next 12 helical transmembrane spans lie at 9–29 (MIVL…GAFI), 49–69 (LAGI…AADI), 99–119 (AAAC…VVAI), 139–159 (ALIV…GMII), 172–192 (FIAG…YAYI), 217–237 (ALWP…GVFS), 242–262 (AAAC…SMSL), 273–293 (GLIT…SWVI), 302–322 (ILGA…VISI), 324–344 (FFIG…VPVF), 366–386 (VAIG…IAVF), and 400–420 (FILM…IALF).

This sequence belongs to the TRAP transporter large permease family. In terms of assembly, the complex comprises the extracytoplasmic solute receptor protein UehA, and the two transmembrane proteins UehB and UehC.

It localises to the cell inner membrane. Its function is as follows. Part of the tripartite ATP-independent periplasmic (TRAP) transport system UehABC, which imports both ectoine and 5-hydroxyectoine as nutrients, and not as osmoprotectants. The sequence is that of Ectoine/5-hydroxyectoine TRAP transporter large permease protein UehC from Ruegeria pomeroyi (strain ATCC 700808 / DSM 15171 / DSS-3) (Silicibacter pomeroyi).